Reading from the N-terminus, the 130-residue chain is S-adenosylmethionine decarboxylase proenzyme (130 aa).

The Schiff-base intermediate with substrate; via pyruvic acid role is filled by S66. Pyruvic acid (Ser); by autocatalysis is present on S66. The Proton acceptor; for processing activity role is filled by H71. The Proton donor; for catalytic activity role is filled by C86.

This sequence belongs to the prokaryotic AdoMetDC family. Type 1 subfamily. Heterotetramer of two alpha and two beta chains arranged as a dimer of alpha/beta heterodimers. Pyruvate serves as cofactor. In terms of processing, is synthesized initially as an inactive proenzyme. Formation of the active enzyme involves a self-maturation process in which the active site pyruvoyl group is generated from an internal serine residue via an autocatalytic post-translational modification. Two non-identical subunits are generated from the proenzyme in this reaction, and the pyruvate is formed at the N-terminus of the alpha chain, which is derived from the carboxyl end of the proenzyme. The post-translation cleavage follows an unusual pathway, termed non-hydrolytic serinolysis, in which the side chain hydroxyl group of the serine supplies its oxygen atom to form the C-terminus of the beta chain, while the remainder of the serine residue undergoes an oxidative deamination to produce ammonia and the pyruvoyl group blocking the N-terminus of the alpha chain.

The enzyme catalyses S-adenosyl-L-methionine + H(+) = S-adenosyl 3-(methylsulfanyl)propylamine + CO2. The protein operates within amine and polyamine biosynthesis; S-adenosylmethioninamine biosynthesis; S-adenosylmethioninamine from S-adenosyl-L-methionine: step 1/1. In terms of biological role, catalyzes the decarboxylation of S-adenosylmethionine to S-adenosylmethioninamine (dcAdoMet), the propylamine donor required for the synthesis of the polyamines spermine and spermidine from the diamine putrescine. The polypeptide is S-adenosylmethionine decarboxylase proenzyme (Bacillus cytotoxicus (strain DSM 22905 / CIP 110041 / 391-98 / NVH 391-98)).